Consider the following 543-residue polypeptide: Glucose-6-phosphate isomerase (543 aa).

Glu353 functions as the Proton donor in the catalytic mechanism. Active-site residues include His384 and Lys504.

This sequence belongs to the GPI family.

It localises to the cytoplasm. The enzyme catalyses alpha-D-glucose 6-phosphate = beta-D-fructose 6-phosphate. The protein operates within carbohydrate biosynthesis; gluconeogenesis. It functions in the pathway carbohydrate degradation; glycolysis; D-glyceraldehyde 3-phosphate and glycerone phosphate from D-glucose: step 2/4. In terms of biological role, catalyzes the reversible isomerization of glucose-6-phosphate to fructose-6-phosphate. This is Glucose-6-phosphate isomerase from Roseiflexus sp. (strain RS-1).